The primary structure comprises 99 residues: Co-chaperonin GroES (99 aa).

It belongs to the GroES chaperonin family. Heptamer of 7 subunits arranged in a ring. Interacts with the chaperonin GroEL.

The protein localises to the cytoplasm. Its function is as follows. Together with the chaperonin GroEL, plays an essential role in assisting protein folding. The GroEL-GroES system forms a nano-cage that allows encapsulation of the non-native substrate proteins and provides a physical environment optimized to promote and accelerate protein folding. GroES binds to the apical surface of the GroEL ring, thereby capping the opening of the GroEL channel. This is Co-chaperonin GroES from Corynebacterium kroppenstedtii (strain DSM 44385 / JCM 11950 / CIP 105744 / CCUG 35717).